Consider the following 261-residue polypeptide: Indole-3-glycerol phosphate synthase (261 aa).

It belongs to the TrpC family.

It catalyses the reaction 1-(2-carboxyphenylamino)-1-deoxy-D-ribulose 5-phosphate + H(+) = (1S,2R)-1-C-(indol-3-yl)glycerol 3-phosphate + CO2 + H2O. It functions in the pathway amino-acid biosynthesis; L-tryptophan biosynthesis; L-tryptophan from chorismate: step 4/5. The protein is Indole-3-glycerol phosphate synthase of Burkholderia mallei (strain NCTC 10247).